A 408-amino-acid chain; its full sequence is Indian hedgehog protein (408 aa).

A signal peptide spans 1 to 23 (MKPARLLLLLSGCALLLAPAVRC). Residue C24 is the site of N-palmitoyl cysteine attachment. Residues E90, E91, D96, T126, E127, D130, and D132 each contribute to the Ca(2+) site. The Zn(2+) site is built by H141, D148, and H183. G198 is lipidated: Cholesterol glycine ester.

Belongs to the hedgehog family. As to quaternary structure, multimer. Interacts with BOC and CDON. Interacts with PTCH1. Interacts with glypican GPC3. Post-translationally, cholesterylation is required for N-product targeting to lipid rafts and multimerization. The C-terminal domain displays an autoproteolysis activity and a cholesterol transferase activity. Both activities result in the cleavage of the full-length protein and covalent attachment of a cholesterol moiety to the C-terminal of the newly generated N-product. The N-product is the active species in both local and long-range signaling, whereas the C-product is degraded in the endoplasmic reticulum. In terms of processing, N-palmitoylation by HHAT of N-product is required for indian hedgehog protein N-product multimerization and full activity. In terms of tissue distribution, expressed in developing midgut, lung and cartilage of developing long bones in the limb.

Its subcellular location is the cell membrane. The protein localises to the endoplasmic reticulum membrane. The protein resides in the golgi apparatus membrane. It localises to the secreted. It carries out the reaction glycyl-L-cysteinyl-[protein] + cholesterol + H(+) = [protein]-C-terminal glycyl cholesterol ester + N-terminal L-cysteinyl-[protein]. Plays a role in embryonic morphogenesis; it is involved in the regulation of endochondral skeleton formation, and the development of retinal pigment epithelium (RPE), photoreceptors and periocular tissues. In terms of biological role, the C-terminal part of the indian hedgehog protein precursor displays an autoproteolysis and a cholesterol transferase activity. Both activities result in the cleavage of the full-length protein into two parts followed by the covalent attachment of a cholesterol moiety to the C-terminal of the newly generated N-product. Both activities occur in the endoplasmic reticulum. Its function is as follows. The dually lipidated indian hedgehog protein N-product is a morphogen which is essential for a variety of patterning events during development. Binds to the patched (PTCH1) receptor, which functions in association with smoothened (SMO), to activate the transcription of target genes. Plays a role in morphogenesis of the skeleton by coordinating growth and differentiation of the endochondral skeleton. Positively regulates PTHLH expression during endochondral bone formation preventing chondrocyte hypertrophy. In contrast, participates in normal chondrocyte proliferation in a PTHLH-independent pathway. The protein is Indian hedgehog protein of Gallus gallus (Chicken).